We begin with the raw amino-acid sequence, 142 residues long: Large ribosomal subunit protein uL13 (142 aa).

It belongs to the universal ribosomal protein uL13 family. Part of the 50S ribosomal subunit.

Its function is as follows. This protein is one of the early assembly proteins of the 50S ribosomal subunit, although it is not seen to bind rRNA by itself. It is important during the early stages of 50S assembly. In Tolumonas auensis (strain DSM 9187 / NBRC 110442 / TA 4), this protein is Large ribosomal subunit protein uL13.